A 463-amino-acid chain; its full sequence is tRNA (guanine(37)-N(1))-methyltransferase (463 aa).

S-adenosyl-L-methionine contacts are provided by residues H207, 245-246 (DL), 274-275 (DG), and N305.

It belongs to the class I-like SAM-binding methyltransferase superfamily. TRM5/TYW2 family. In terms of assembly, monomer.

Its subcellular location is the mitochondrion matrix. It localises to the nucleus. The protein localises to the cytoplasm. The catalysed reaction is guanosine(37) in tRNA + S-adenosyl-L-methionine = N(1)-methylguanosine(37) in tRNA + S-adenosyl-L-homocysteine + H(+). Specifically methylates the N1 position of guanosine-37 in various cytoplasmic and mitochondrial tRNAs. Methylation is not dependent on the nature of the nucleoside 5' of the target nucleoside. This is the first step in the biosynthesis of wybutosine (yW), a modified base adjacent to the anticodon of tRNAs and required for accurate decoding. This chain is tRNA (guanine(37)-N(1))-methyltransferase, found in Pediculus humanus subsp. corporis (Body louse).